The following is a 300-amino-acid chain: Acetylglutamate kinase (300 aa).

Substrate contacts are provided by residues 73-74 (GG), arginine 95, and asparagine 197.

This sequence belongs to the acetylglutamate kinase family. ArgB subfamily.

The protein localises to the cytoplasm. It carries out the reaction N-acetyl-L-glutamate + ATP = N-acetyl-L-glutamyl 5-phosphate + ADP. Its pathway is amino-acid biosynthesis; L-arginine biosynthesis; N(2)-acetyl-L-ornithine from L-glutamate: step 2/4. Functionally, catalyzes the ATP-dependent phosphorylation of N-acetyl-L-glutamate. This is Acetylglutamate kinase from Bordetella bronchiseptica (strain ATCC BAA-588 / NCTC 13252 / RB50) (Alcaligenes bronchisepticus).